A 78-amino-acid polypeptide reads, in one-letter code: Acyl carrier protein (78 aa).

Residues 2–77 enclose the Carrier domain; sequence STIEERVKKI…AAIDYINGHQ (76 aa). S37 is modified (O-(pantetheine 4'-phosphoryl)serine).

Belongs to the acyl carrier protein (ACP) family. 4'-phosphopantetheine is transferred from CoA to a specific serine of apo-ACP by AcpS. This modification is essential for activity because fatty acids are bound in thioester linkage to the sulfhydryl of the prosthetic group.

It localises to the cytoplasm. Its pathway is lipid metabolism; fatty acid biosynthesis. Its function is as follows. Carrier of the growing fatty acid chain in fatty acid biosynthesis. This chain is Acyl carrier protein, found in Shigella flexneri.